Consider the following 421-residue polypeptide: Histone-lysine N-methyltransferase SUV39H1 (421 aa).

A Chromo domain is found at 46-104 (FEVEYLWNYKKVQDQELYLVKWKYYPDSESTWEPRHHLKCNNLLKQFHLDLERELLRRA). Residues 189 to 249 (AGCKCRDCFS…SCPNRVVQKG (61 aa)) form the Pre-SET domain. Positions 191, 193, 196, 203, 204, 231, 235, 237, and 241 each coordinate Zn(2+). Residues 252-375 (YKFCIFRTSD…TGEELTFDYN (124 aa)) form the SET domain. Residues 263-265 (RGW), Tyr-306, and 332-333 (NH) contribute to the S-adenosyl-L-methionine site. Positions 335, 409, 411, and 416 each coordinate Zn(2+). Residues 405 to 421 (VRVECKCGVSSCRKYLF) form the Post-SET domain.

It belongs to the class V-like SAM-binding methyltransferase superfamily. Histone-lysine methyltransferase family. Suvar3-9 subfamily.

It is found in the nucleus. It localises to the chromosome. The protein resides in the centromere. It carries out the reaction L-lysyl(9)-[histone H3] + 3 S-adenosyl-L-methionine = N(6),N(6),N(6)-trimethyl-L-lysyl(9)-[histone H3] + 3 S-adenosyl-L-homocysteine + 3 H(+). Histone methyltransferase that specifically trimethylates 'Lys-9' of histone H3 using monomethylated H3 'Lys-9' as substrate. H3 'Lys-9' trimethylation represents a specific tag for epigenetic transcriptional repression by recruiting HP1 (CBX1, CBX3 and/or CBX5) proteins to methylated histones. Mainly functions in heterochromatin regions, thereby playing a central role in the establishment of constitutive heterochromatin at pericentric and telomere regions. H3 'Lys-9' trimethylation is also required to direct DNA methylation at pericentric repeats. SUV39H1 is targeted to histone H3 via its interaction with RB1 and is involved in many processes. This Xenopus laevis (African clawed frog) protein is Histone-lysine N-methyltransferase SUV39H1 (suv39h1).